We begin with the raw amino-acid sequence, 268 residues long: Imidazole glycerol phosphate synthase subunit HisF (268 aa).

Active-site residues include D12 and D131.

It belongs to the HisA/HisF family. As to quaternary structure, heterodimer of HisH and HisF.

Its subcellular location is the cytoplasm. The enzyme catalyses 5-[(5-phospho-1-deoxy-D-ribulos-1-ylimino)methylamino]-1-(5-phospho-beta-D-ribosyl)imidazole-4-carboxamide + L-glutamine = D-erythro-1-(imidazol-4-yl)glycerol 3-phosphate + 5-amino-1-(5-phospho-beta-D-ribosyl)imidazole-4-carboxamide + L-glutamate + H(+). It functions in the pathway amino-acid biosynthesis; L-histidine biosynthesis; L-histidine from 5-phospho-alpha-D-ribose 1-diphosphate: step 5/9. Functionally, IGPS catalyzes the conversion of PRFAR and glutamine to IGP, AICAR and glutamate. The HisF subunit catalyzes the cyclization activity that produces IGP and AICAR from PRFAR using the ammonia provided by the HisH subunit. The chain is Imidazole glycerol phosphate synthase subunit HisF from Methanocorpusculum labreanum (strain ATCC 43576 / DSM 4855 / Z).